Consider the following 216-residue polypeptide: Redox-sensing transcriptional repressor Rex (216 aa).

The H-T-H motif DNA-binding region spans 16-55 (VYYRYLNVLLNANKHRVSSTELSEAVQVDSATIRRDFSYF). 90–95 (GVGSLG) is an NAD(+) binding site.

This sequence belongs to the transcriptional regulatory Rex family. In terms of assembly, homodimer.

Its subcellular location is the cytoplasm. Functionally, modulates transcription in response to changes in cellular NADH/NAD(+) redox state. The sequence is that of Redox-sensing transcriptional repressor Rex from Limosilactobacillus fermentum (strain NBRC 3956 / LMG 18251) (Lactobacillus fermentum).